A 201-amino-acid polypeptide reads, in one-letter code: Retinol-binding protein 4 (201 aa).

The N-terminal stretch at 1–18 is a signal peptide; sequence MKWVWALLLLAALGSGRA. 3 cysteine pairs are disulfide-bonded: Cys-22–Cys-178, Cys-88–Cys-192, and Cys-138–Cys-147. Gln-116 serves as a coordination point for substrate. Arg-139 bears the Omega-N-methylarginine mark.

This sequence belongs to the calycin superfamily. Lipocalin family. Interacts with TTR. Interaction with TTR prevents its loss by filtration through the kidney glomeruli. Interacts with STRA6. As to expression, detected in blood plasma and in urine (at protein level).

Its subcellular location is the secreted. Its function is as follows. Retinol-binding protein that mediates retinol transport in blood plasma. Delivers retinol from the liver stores to the peripheral tissues. Transfers the bound all-trans retinol to STRA6, that then facilitates retinol transport across the cell membrane. This is Retinol-binding protein 4 (RBP4) from Homo sapiens (Human).